The following is a 1080-amino-acid chain: DNA-directed RNA polymerase subunit beta C-terminal section (1080 aa).

Belongs to the RNA polymerase beta chain family. In plastids the minimal PEP RNA polymerase catalytic core is composed of four subunits: alpha, beta, beta', and beta''. When a (nuclear-encoded) sigma factor is associated with the core the holoenzyme is formed, which can initiate transcription.

It is found in the plastid. The protein localises to the chloroplast. The enzyme catalyses RNA(n) + a ribonucleoside 5'-triphosphate = RNA(n+1) + diphosphate. Its function is as follows. DNA-dependent RNA polymerase catalyzes the transcription of DNA into RNA using the four ribonucleoside triphosphates as substrates. The polypeptide is DNA-directed RNA polymerase subunit beta C-terminal section (rpoB2) (Stigeoclonium helveticum (Green alga)).